A 142-amino-acid chain; its full sequence is Galactose-6-phosphate isomerase subunit LacA 2 (142 aa).

The protein belongs to the LacAB/RpiB family. As to quaternary structure, heteromultimeric protein consisting of LacA and LacB.

It carries out the reaction aldehydo-D-galactose 6-phosphate = keto-D-tagatose 6-phosphate. It functions in the pathway carbohydrate metabolism; D-galactose 6-phosphate degradation; D-tagatose 6-phosphate from D-galactose 6-phosphate: step 1/1. The polypeptide is Galactose-6-phosphate isomerase subunit LacA 2 (Streptococcus pyogenes serotype M1).